A 112-amino-acid chain; its full sequence is Ig kappa chain V-III region TEPC 124 (112 aa).

Residues D1–C23 are framework-1. A disulfide bridge connects residues C23 and C92. Residues R24–Z38 form a complementarity-determining-1 region. The segment at W39 to Y53 is framework-2. Positions R54–S60 are complementarity-determining-2. The tract at residues G61 to C92 is framework-3. A complementarity-determining-3 region spans residues Z93–T101. Residues F102–K111 are framework-4.

The sequence is that of Ig kappa chain V-III region TEPC 124 from Mus musculus (Mouse).